A 366-amino-acid polypeptide reads, in one-letter code: Purple acid phosphatase 3 (366 aa).

Residues 1–32 form the signal peptide; sequence MTYIYRDTKITTKSTIPFLIFFLFCFSNLSMA. Residue Asp-81 participates in Fe cation binding. N-linked (GlcNAc...) asparagine glycosylation occurs at Asn-89. Positions 114 and 117 each coordinate Fe cation. Asp-114 is a binding site for Zn(2+). The Zn(2+) site is built by Asn-152 and His-246. The Proton donor role is filled by His-255. Position 281 (His-281) interacts with Zn(2+). 281-283 provides a ligand contact to substrate; that stretch reads HDH. A Fe cation-binding site is contributed by His-283.

This sequence belongs to the metallophosphoesterase superfamily. Purple acid phosphatase family. Homodimer. Fe cation is required as a cofactor. It depends on Zn(2+) as a cofactor. As to expression, expressed in stems, leaves, flowers and siliques.

The protein resides in the secreted. It catalyses the reaction a phosphate monoester + H2O = an alcohol + phosphate. In Arabidopsis thaliana (Mouse-ear cress), this protein is Purple acid phosphatase 3 (PAP3).